The sequence spans 338 residues: 3-dehydroquinate synthase (338 aa).

NAD(+)-binding positions include 58-63 (DGERAK), 92-96 (GTTGD), 116-117 (TT), K129, and K138. Positions 169, 229, and 245 each coordinate Zn(2+).

This sequence belongs to the sugar phosphate cyclases superfamily. Dehydroquinate synthase family. The cofactor is NAD(+). Co(2+) is required as a cofactor. Zn(2+) serves as cofactor.

Its subcellular location is the cytoplasm. It catalyses the reaction 7-phospho-2-dehydro-3-deoxy-D-arabino-heptonate = 3-dehydroquinate + phosphate. Its pathway is metabolic intermediate biosynthesis; chorismate biosynthesis; chorismate from D-erythrose 4-phosphate and phosphoenolpyruvate: step 2/7. Its function is as follows. Catalyzes the conversion of 3-deoxy-D-arabino-heptulosonate 7-phosphate (DAHP) to dehydroquinate (DHQ). This Picrophilus torridus (strain ATCC 700027 / DSM 9790 / JCM 10055 / NBRC 100828 / KAW 2/3) protein is 3-dehydroquinate synthase.